Consider the following 253-residue polypeptide: Proteasome subunit alpha (253 aa).

Over residues 232-242 (AAGASTAGEAG) the composition is skewed to low complexity. The segment at 232-253 (AAGASTAGEAGSAEDEGSDDEK) is disordered. Residues 243–253 (SAEDEGSDDEK) are compositionally biased toward acidic residues.

The protein belongs to the peptidase T1A family. The 20S proteasome core is composed of 14 alpha and 14 beta subunits that assemble into four stacked heptameric rings, resulting in a barrel-shaped structure. The two inner rings, each composed of seven catalytic beta subunits, are sandwiched by two outer rings, each composed of seven alpha subunits. The catalytic chamber with the active sites is on the inside of the barrel. Has a gated structure, the ends of the cylinder being occluded by the N-termini of the alpha-subunits. Is capped by the proteasome-associated ATPase, ARC.

The protein resides in the cytoplasm. Its pathway is protein degradation; proteasomal Pup-dependent pathway. The formation of the proteasomal ATPase ARC-20S proteasome complex, likely via the docking of the C-termini of ARC into the intersubunit pockets in the alpha-rings, may trigger opening of the gate for substrate entry. Interconversion between the open-gate and close-gate conformations leads to a dynamic regulation of the 20S proteasome proteolysis activity. In terms of biological role, component of the proteasome core, a large protease complex with broad specificity involved in protein degradation. The sequence is that of Proteasome subunit alpha from Streptomyces avermitilis (strain ATCC 31267 / DSM 46492 / JCM 5070 / NBRC 14893 / NCIMB 12804 / NRRL 8165 / MA-4680).